The primary structure comprises 690 residues: Guanylate cyclase soluble subunit alpha-1 (690 aa).

Phosphoserine is present on Ser267. The Guanylate cyclase domain maps to 481–608 (TMLFSDIVGF…NNVTLANKFE (128 aa)).

Belongs to the adenylyl cyclase class-4/guanylyl cyclase family. The active enzyme is formed by a heterodimer of an alpha and a beta subunit. Heterodimer with GUCY1B1. Mg(2+) serves as cofactor. Mn(2+) is required as a cofactor.

It localises to the cytoplasm. The enzyme catalyses GTP = 3',5'-cyclic GMP + diphosphate. Activated by nitric oxide in the presence of magnesium or manganese ions. The polypeptide is Guanylate cyclase soluble subunit alpha-1 (GUCY1A1) (Canis lupus familiaris (Dog)).